Here is a 745-residue protein sequence, read N- to C-terminus: DEAD-box ATP-dependent RNA helicase 3A, chloroplastic (745 aa).

Residues 1–41 constitute a chloroplast transit peptide; it reads MASLVTLPAIAFSNPATASGAVRLRAAAFRCWALRRRGWAV. A Q motif motif is present at residues 88-116; sequence LAIARLGLPDELVATLEKRGITHLFPIQR. Residues 119 to 295 form the Helicase ATP-binding domain; sequence LIPALGGRDL…RRYLNNPLTI (177 aa). Residue 132–139 participates in ATP binding; sequence AKTGTGKT. The DEAD box signature appears at 243–246; sequence DEAD. Positions 324–469 constitute a Helicase C-terminal domain; that stretch reads ILSDLITVYA…ISPPSIEEVL (146 aa). Positions 606 to 724 are disordered; sequence LTKISKLPAL…SLGGRESSRS (119 aa). Residues 641–650 are compositionally biased toward gly residues; the sequence is GGGASRGRGG. The segment covering 656 to 670 has biased composition (basic and acidic residues); that stretch reads EDRYRRGGRSLRSDN. Residues 687 to 724 are compositionally biased toward low complexity; it reads RSSSSFGGRSSSYGSRGSPSPSFGVRSSSLGGRESSRS. A CCHC-type zinc finger spans residues 727–744; it reads GACFNCGESGHRASDCPN.

This sequence belongs to the DEAD box helicase family. DDX21/DDX50 subfamily.

The protein localises to the plastid. It localises to the chloroplast. It carries out the reaction ATP + H2O = ADP + phosphate + H(+). Nuclear genome-encoded factor involved in ribosome biogenesis in chloroplasts. Binds specific group II introns in chloroplasts and facilitates their splicing. Required for normal development of chloroplasts. This Zea mays (Maize) protein is DEAD-box ATP-dependent RNA helicase 3A, chloroplastic.